The sequence spans 37 residues: Cytochrome b6-f complex subunit 5 (37 aa).

The chain crosses the membrane as a helical span at residues 5–25 (LLSGIVLGLVPVTIAGLFVTA).

The protein belongs to the PetG family. In terms of assembly, the 4 large subunits of the cytochrome b6-f complex are cytochrome b6, subunit IV (17 kDa polypeptide, PetD), cytochrome f and the Rieske protein, while the 4 small subunits are PetG, PetL, PetM and PetN. The complex functions as a dimer.

The protein localises to the plastid. It localises to the chloroplast thylakoid membrane. Functionally, component of the cytochrome b6-f complex, which mediates electron transfer between photosystem II (PSII) and photosystem I (PSI), cyclic electron flow around PSI, and state transitions. PetG is required for either the stability or assembly of the cytochrome b6-f complex. This chain is Cytochrome b6-f complex subunit 5, found in Stigeoclonium helveticum (Green alga).